The chain runs to 96 residues: uncharacterized protein (96 aa).

Belongs to the NifU family.

This is an uncharacterized protein from Azotobacter vinelandii.